A 395-amino-acid polypeptide reads, in one-letter code: Probable L-tyrosine/L-aspartate decarboxylase (395 aa).

Lys-242 is subject to N6-(pyridoxal phosphate)lysine.

This sequence belongs to the group II decarboxylase family. MfnA subfamily. Requires pyridoxal 5'-phosphate as cofactor.

The catalysed reaction is L-tyrosine + H(+) = tyramine + CO2. It catalyses the reaction L-aspartate + H(+) = beta-alanine + CO2. It participates in cofactor biosynthesis; methanofuran biosynthesis. The protein operates within cofactor biosynthesis; coenzyme A biosynthesis. Functionally, catalyzes the decarboxylation of L-tyrosine to produce tyramine for methanofuran biosynthesis. Can also catalyze the decarboxylation of L-aspartate to produce beta-alanine for coenzyme A (CoA) biosynthesis. The chain is Probable L-tyrosine/L-aspartate decarboxylase from Methanosarcina barkeri (strain Fusaro / DSM 804).